The chain runs to 230 residues: Flagellar L-ring protein (230 aa).

The N-terminal stretch at 1–15 (MSRLPSLSRLCLAIA) is a signal peptide. Cys16 carries the N-palmitoyl cysteine lipid modification. A lipid anchor (S-diacylglycerol cysteine) is attached at Cys16.

The protein belongs to the FlgH family. In terms of assembly, the basal body constitutes a major portion of the flagellar organelle and consists of four rings (L,P,S, and M) mounted on a central rod.

The protein resides in the cell outer membrane. It localises to the bacterial flagellum basal body. Its function is as follows. Assembles around the rod to form the L-ring and probably protects the motor/basal body from shearing forces during rotation. In Xanthomonas euvesicatoria pv. vesicatoria (strain 85-10) (Xanthomonas campestris pv. vesicatoria), this protein is Flagellar L-ring protein.